Reading from the N-terminus, the 342-residue chain is Dihydroorotate dehydrogenase (quinone) (342 aa).

FMN is bound by residues 60-64 and threonine 84; that span reads AGFDK. Lysine 64 lines the substrate pocket. Residue 109-113 participates in substrate binding; sequence NRMGF. FMN is bound by residues asparagine 137 and asparagine 170. A substrate-binding site is contributed by asparagine 170. The active-site Nucleophile is the serine 173. A substrate-binding site is contributed by asparagine 175. Lysine 215 and threonine 243 together coordinate FMN. 244–245 is a substrate binding site; it reads NT. FMN is bound by residues glycine 266, glycine 295, and 316-317; that span reads YT.

Belongs to the dihydroorotate dehydrogenase family. Type 2 subfamily. Monomer. The cofactor is FMN.

Its subcellular location is the cell membrane. It carries out the reaction (S)-dihydroorotate + a quinone = orotate + a quinol. The protein operates within pyrimidine metabolism; UMP biosynthesis via de novo pathway; orotate from (S)-dihydroorotate (quinone route): step 1/1. Functionally, catalyzes the conversion of dihydroorotate to orotate with quinone as electron acceptor. This chain is Dihydroorotate dehydrogenase (quinone), found in Halorhodospira halophila (strain DSM 244 / SL1) (Ectothiorhodospira halophila (strain DSM 244 / SL1)).